Reading from the N-terminus, the 536-residue chain is Apoptosis inhibitor 5 homolog (536 aa).

The interval 462–536 is disordered; that stretch reads ITFGEKAAAN…GYRNRRFNKY (75 aa). Positions 472–487 are enriched in basic and acidic residues; that stretch reads GKDKDQEPEKKSRPSN. Residues 498-507 show a composition bias toward polar residues; it reads KYSNKVNQSY. The span at 516–528 shows a compositional bias: gly residues; that stretch reads RGGGGGGGSGGGY.

Belongs to the API5 family.

It is found in the nucleus. In terms of biological role, antiapoptotic factor. Also known to efficiently suppress E2F1-induced apoptosis. This chain is Apoptosis inhibitor 5 homolog, found in Drosophila melanogaster (Fruit fly).